The chain runs to 289 residues: Acetyl-coenzyme A carboxylase carboxyl transferase subunit beta (289 aa).

The CoA carboxyltransferase N-terminal domain maps to 28–289; the sequence is VMTKCPKCKK…QGGEMAVWQS (262 aa). Residues cysteine 32, cysteine 35, cysteine 51, and cysteine 54 each contribute to the Zn(2+) site. The C4-type zinc finger occupies 32–54; the sequence is CPKCKKIMYTKELLKNLKVCVNC.

This sequence belongs to the AccD/PCCB family. In terms of assembly, acetyl-CoA carboxylase is a heterohexamer composed of biotin carboxyl carrier protein (AccB), biotin carboxylase (AccC) and two subunits each of ACCase subunit alpha (AccA) and ACCase subunit beta (AccD). Zn(2+) serves as cofactor.

Its subcellular location is the cytoplasm. It carries out the reaction N(6)-carboxybiotinyl-L-lysyl-[protein] + acetyl-CoA = N(6)-biotinyl-L-lysyl-[protein] + malonyl-CoA. The protein operates within lipid metabolism; malonyl-CoA biosynthesis; malonyl-CoA from acetyl-CoA: step 1/1. In terms of biological role, component of the acetyl coenzyme A carboxylase (ACC) complex. Biotin carboxylase (BC) catalyzes the carboxylation of biotin on its carrier protein (BCCP) and then the CO(2) group is transferred by the transcarboxylase to acetyl-CoA to form malonyl-CoA. This is Acetyl-coenzyme A carboxylase carboxyl transferase subunit beta from Bacillus cereus (strain ATCC 10987 / NRS 248).